Consider the following 319-residue polypeptide: tRNA dimethylallyltransferase (319 aa).

11 to 18 (GPTCSGKS) contributes to the ATP binding site. 13–18 (TCSGKS) contacts substrate. Interaction with substrate tRNA stretches follow at residues 36–39 (DSMQ) and 160–164 (QRIAR).

Belongs to the IPP transferase family. Monomer. It depends on Mg(2+) as a cofactor.

It catalyses the reaction adenosine(37) in tRNA + dimethylallyl diphosphate = N(6)-dimethylallyladenosine(37) in tRNA + diphosphate. Catalyzes the transfer of a dimethylallyl group onto the adenine at position 37 in tRNAs that read codons beginning with uridine, leading to the formation of N6-(dimethylallyl)adenosine (i(6)A). This is tRNA dimethylallyltransferase from Granulibacter bethesdensis (strain ATCC BAA-1260 / CGDNIH1).